The sequence spans 338 residues: Methionine import ATP-binding protein MetN 1 (338 aa).

The 240-residue stretch at 2-241 (IELHQVSKSF…AKHATTKRFV (240 aa)) folds into the ABC transporter domain. Residue 38–45 (GYSGAGKS) coordinates ATP.

The protein belongs to the ABC transporter superfamily. Methionine importer (TC 3.A.1.24) family. The complex is composed of two ATP-binding proteins (MetN), two transmembrane proteins (MetI) and a solute-binding protein (MetQ).

The protein resides in the cell membrane. The enzyme catalyses L-methionine(out) + ATP + H2O = L-methionine(in) + ADP + phosphate + H(+). It catalyses the reaction D-methionine(out) + ATP + H2O = D-methionine(in) + ADP + phosphate + H(+). Its function is as follows. Part of the ABC transporter complex MetNIQ involved in methionine import. Responsible for energy coupling to the transport system. This Listeria monocytogenes serovar 1/2a (strain ATCC BAA-679 / EGD-e) protein is Methionine import ATP-binding protein MetN 1.